A 233-amino-acid polypeptide reads, in one-letter code: uncharacterized protein (233 aa).

This sequence belongs to the methyltransferase superfamily.

This is an uncharacterized protein from Bacillus subtilis (strain 168).